Reading from the N-terminus, the 225-residue chain is Small ribosomal subunit protein uS3 (225 aa).

Residues 16–85 (VCEYVVKETE…TPQIEVKDVK (70 aa)) enclose the KH type-2 domain. Positions 202 to 225 (EVGTESKADQTDVEGRETGNAEES) are disordered. The span at 205–225 (TESKADQTDVEGRETGNAEES) shows a compositional bias: basic and acidic residues.

The protein belongs to the universal ribosomal protein uS3 family. Part of the 30S ribosomal subunit.

Binds the lower part of the 30S subunit head. This is Small ribosomal subunit protein uS3 from Thermoplasma acidophilum (strain ATCC 25905 / DSM 1728 / JCM 9062 / NBRC 15155 / AMRC-C165).